A 90-amino-acid polypeptide reads, in one-letter code: Cluster 41 protein AFLA_114800 (90 aa).

The helical transmembrane segment at 55 to 77 threads the bilayer; it reads GLLLLCCFYPIGNLILLVRLSLV. N80 carries N-linked (GlcNAc...) asparagine glycosylation.

It is found in the membrane. In terms of biological role, cluster 41 protein; part of the gene cluster 41 that mediates the biosynthesis of an extracellular and diffusible metabolite that is able to stimulate colony sclerotial production. This Aspergillus flavus (strain ATCC 200026 / FGSC A1120 / IAM 13836 / NRRL 3357 / JCM 12722 / SRRC 167) protein is Cluster 41 protein AFLA_114800.